We begin with the raw amino-acid sequence, 1562 residues long: MAAGSGGSGGSGGGPGPGPGGGGGPSGSGSGPGSNGGLGSGGELHPRTGRLVSLSACGRTARRQQPGQEFNHGLVLSREPLRDGRVFTVRIDRKVNSWSGSIEIGVTALDPSVLDFPSSATGLKGGSWVVSGCSVLRDGRSVLEEYGQDLDQLGEGDRVGVERTVAGELRLWVNGRDCGVAATGLPPRVWAVVDLYGKCTQITVLPPEPGFSPPTPIPTPPLEPLAPTEDSALAEQGTSADEAFMVSPAQARPETFPNSLESHNDFANMELSEVVSNTILSAYNGGLLNVNLSSPPAGEGLGSSGAATSPILTSNDALLFHEKCGTLIKLSNNNKTAERRRPLDEFNNGVVMTNRPLRDNEMFEIRIDKLVDKWSGSIEIGVTTHNPNSLEYPATMTNLQSGTIMMSGCGILTNGKGTRREYCEFSLDELQEGDHIGLTRKSNSALHFFINGIDQGVATPLTPPVVYGVVDLYGMAVKVTIVHNNNHSDRLRRNNAILRALSPEGALRRAAPAAQAEPERLLFHPNCGQKAAITHEGRTALRPHATDDFNHGVVLSSRALRDGEVFQVRIDKMVDKWAGSIEIGVTTHNPAYLQLPSTMTNLRSGTWMMTGNGVMHNGTTILDEYGHNLDRLKAGDTVGVVRREDGTLHFFVNGMTQGPAAWNVPPGVYAVVDLYGQAAQATIVDDVEVAPVPEPLPEGNNQVSPSSPSSGAGGSDLRFHQLHGSNAVITNGGRTALRHNCRSEFNDAIVISNRALRDGELFEIVIQKMVDRWSGSIEAGVTAIRPEDLEFPNTMTDIDYDTWMLSGTAIMQDGNTMRNNYGCDLDALGTGARIGMMRTAKGDLHYFINGQDQGAACSGLPPGKEVYAVVDLYGQCVQVSITNATGPMDNSLATSNTATEKSFPLHSPVAGVAHRFHSTCGKNVTLEEDGTRAVRAAGYAHGLVFSTKELRAEEVFEVKVEELDEKWAGSLRLGLTTLAPGEMGPGAGGGGPGLPPSLPELRTKTTWMVSSCEVRRDGQLQRMNYGRNLERLGVGSRVGVRRGADDTMHILVDGEDMGPAATGIAKNVWAVLDLYGPVRGVSIVSSTRLEESEGTQPPSPSSDTGSEGEEDDEGEEHGLGGQNEVGIIPTTLEFLENHGKNILLSNGNRTATRVASYNQGIVVINQPLVPQLLVQVRIDFLNRQWTSSLVLGVITCAPERLNFPASACALKRAAWLLRGRGVFHNGLKICEKFGPNLDTCPEGTILGLRLDSSGGLHLHVNGVDQGVAVPDVPQPCHALVDLYGQCEQVTIVNPEPGAASGKSAGTQGDMEKADMVDGIKESVCWGPPPAASPLKSCEYHALCSRFQELLLLPEDYFMPPPKRSLCYCESCRKLRGDEAHRRRGEPPREYALPFGWCRFNLRVNPRLEAGTLTKKWHMAYHGSNVAAVRRVLDRGELGAGTASILSCRPLKGEPGVGFEEPGENCAPPREEQPPPVLLSPSLQYAGAETLASKVQFRDPKSQRTHQAQVAFQVCVRPGSYTPGPPSAALGEPPDPHFSPAELEWVTKEKGATLLCALLVRVE.

Residues 1 to 42 show a composition bias toward gly residues; the sequence is MAAGSGGSGGSGGGPGPGPGGGGGPSGSGSGPGSNGGLGSGG. Disordered regions lie at residues 1 to 48 and 207 to 236; these read MAAG…HPRT and PEPG…LAEQ. 2 NHR domains span residues 41–207 and 317–484; these read GGEL…VLPP and ALLF…IVHN. Pro residues predominate over residues 207 to 224; it reads PEPGFSPPTPIPTPPLEP. Ser502 is subject to Phosphoserine. NHR domains are found at residues 520 to 686 and 716 to 884; these read RLLF…IVDD and DLRF…ITNA. The tract at residues 691–716 is disordered; that stretch reads PVPEPLPEGNNQVSPSSPSSGAGGSD. Ser907 carries the post-translational modification Phosphoserine. In terms of domain architecture, NHR 5 spans 913 to 1086; the sequence is AHRFHSTCGK…PVRGVSIVSS (174 aa). The interval 1086–1123 is disordered; the sequence is STRLEESEGTQPPSPSSDTGSEGEEDDEGEEHGLGGQN. Over residues 1106–1115 the composition is skewed to acidic residues; the sequence is SEGEEDDEGE. An NHR 6 domain is found at 1131 to 1294; that stretch reads TLEFLENHGK…QCEQVTIVNP (164 aa).

Interacts with CCP110; this interaction propmotes CCP110 ubiquitination and degradation via the proteasome pathway. Via its interaction with CCP110, may indirectly interact with CEP97. Interacts with the E3 ubiquitin-protein ligase HERC2 and UBE3A. May interact with MAPK6 and hence mediate MAPK6 interaction with UBE3A. Interaction with UBE3A may be indirect and mediated by HERC2. Post-translationally, ubiquitinated; undergoes HERC2-dependent 'Lys-48' ubiquitination. This ubiquitination leads to proteasomal degradation. In terms of tissue distribution, widely expressed at high levels (including brain).

It is found in the cytoplasm. The protein localises to the cytoskeleton. The protein resides in the microtubule organizing center. Its subcellular location is the centrosome. It localises to the centriole. Promotes CCP110 ubiquitination and proteasome-dependent degradation. By counteracting accumulation of CP110, maintains normal centriolar homeostasis and preventing formation of ectopic microtubular organizing centers. The protein is Neuralized-like protein 4 (NEURL4) of Homo sapiens (Human).